The chain runs to 1001 residues: Transcription-repair-coupling factor (1001 aa).

In terms of domain architecture, Helicase ATP-binding spans 499–658; the sequence is DLSSHRVMDR…LSQIKGISSL (160 aa). 512–519 is an ATP binding site; it reads GDVGFGKT. A DEEH box motif is present at residues 611–614; the sequence is DEEH. A Helicase C-terminal domain is found at 679–835; it reads LLKEIIYREL…SIAYHDLEIR (157 aa).

This sequence in the N-terminal section; belongs to the UvrB family. In the C-terminal section; belongs to the helicase family. RecG subfamily.

It is found in the cytoplasm. In terms of biological role, couples transcription and DNA repair by recognizing RNA polymerase (RNAP) stalled at DNA lesions. Mediates ATP-dependent release of RNAP and its truncated transcript from the DNA, and recruitment of nucleotide excision repair machinery to the damaged site. This is Transcription-repair-coupling factor from Helicobacter pylori (strain J99 / ATCC 700824) (Campylobacter pylori J99).